Here is a 463-residue protein sequence, read N- to C-terminus: Nitrogenase iron-molybdenum cofactor biosynthesis protein NifE (463 aa).

This sequence belongs to the NifD/NifK/NifE/NifN family.

Its pathway is cofactor biosynthesis; Fe-Mo cofactor biosynthesis. Its function is as follows. This protein may play a role in the biosynthesis of the prosthetic group of nitrogenase (FeMo cofactor). This chain is Nitrogenase iron-molybdenum cofactor biosynthesis protein NifE (nifE2), found in Methanosarcina barkeri.